The sequence spans 287 residues: Phosphatidylserine decarboxylase proenzyme (287 aa).

Catalysis depends on charge relay system; for autoendoproteolytic cleavage activity residues aspartate 90, histidine 147, and serine 252. The active-site Schiff-base intermediate with substrate; via pyruvic acid; for decarboxylase activity is the serine 252. At serine 252 the chain carries Pyruvic acid (Ser); by autocatalysis.

Belongs to the phosphatidylserine decarboxylase family. PSD-B subfamily. Prokaryotic type I sub-subfamily. In terms of assembly, heterodimer of a large membrane-associated beta subunit and a small pyruvoyl-containing alpha subunit. Pyruvate is required as a cofactor. Post-translationally, is synthesized initially as an inactive proenzyme. Formation of the active enzyme involves a self-maturation process in which the active site pyruvoyl group is generated from an internal serine residue via an autocatalytic post-translational modification. Two non-identical subunits are generated from the proenzyme in this reaction, and the pyruvate is formed at the N-terminus of the alpha chain, which is derived from the carboxyl end of the proenzyme. The autoendoproteolytic cleavage occurs by a canonical serine protease mechanism, in which the side chain hydroxyl group of the serine supplies its oxygen atom to form the C-terminus of the beta chain, while the remainder of the serine residue undergoes an oxidative deamination to produce ammonia and the pyruvoyl prosthetic group on the alpha chain. During this reaction, the Ser that is part of the protease active site of the proenzyme becomes the pyruvoyl prosthetic group, which constitutes an essential element of the active site of the mature decarboxylase.

Its subcellular location is the cell membrane. It catalyses the reaction a 1,2-diacyl-sn-glycero-3-phospho-L-serine + H(+) = a 1,2-diacyl-sn-glycero-3-phosphoethanolamine + CO2. The protein operates within phospholipid metabolism; phosphatidylethanolamine biosynthesis; phosphatidylethanolamine from CDP-diacylglycerol: step 2/2. In terms of biological role, catalyzes the formation of phosphatidylethanolamine (PtdEtn) from phosphatidylserine (PtdSer). The protein is Phosphatidylserine decarboxylase proenzyme of Pseudomonas putida (strain ATCC 47054 / DSM 6125 / CFBP 8728 / NCIMB 11950 / KT2440).